Consider the following 300-residue polypeptide: MCSTMTATMNQTICEKQNITMDLLRSPIQIPSASDTIKIETPSTISSQPSPIQTPLAAASSDNFERPSLSYKDLIIEAIDRSPEKRLKLNEIYQVIRLLHPYYRHRPDQWGWQNSIRHNLSLHDCFVKLPLKQTSASGVVGHFWTVVPELSDKQTLRRRNRQQPRALAKKSDAGRTLSRDDRGSSGSGETSPSPSQPSISPPNENPMPSVQALNVLELLSGMNDYKGTLFQNNYRTNLIQDNSAVNGLQNLLTTTLMQINPQLGALLSLANLNNLTTNQLQIASPSLSPIKAESQSFLLQ.

The segment at residues 66–161 is a DNA-binding region (fork-head); sequence RPSLSYKDLI…DKQTLRRRNR (96 aa). Residues 153 to 208 are disordered; sequence KQTLRRRNRQQPRALAKKSDAGRTLSRDDRGSSGSGETSPSPSQPSISPPNENPMP. The span at 169–183 shows a compositional bias: basic and acidic residues; the sequence is KKSDAGRTLSRDDRG. Residues 187-198 are compositionally biased toward low complexity; sequence SGETSPSPSQPS.

As to expression, expressed in mechanosensory neurons.

It is found in the nucleus. Functionally, transcription factor. Binds to the regulatory elements of genes that contain the sequence motif 5'-TTGTTTCT-3'. Involved in regulating intestinal transcription of vitellogenin vit-2, acting in concert with transcription factors elt-2, mab-3 and daf-16, and also the TGF-beta/Sma/Mab pathway. Functions downstream of the insulin/IGF-1-like signaling (IIS) mediated pathway, in regeneration of axons after injury and in short-term memory, perhaps acting in neurons, and in modulation of longevity, perhaps acting non-neuronally. Plays a role in the modulation of endoplasmic reticulum (ER) homeostasis during chemical and pathogen stress, including exposure to the Gram-negative bacterium P.aeruginosa. The chain is Forkhead transcription factor fkh-9 from Caenorhabditis elegans.